We begin with the raw amino-acid sequence, 284 residues long: Xyloglucan endotransglucosylase/hydrolase protein 22 (284 aa).

A signal peptide spans 1–21 (MAITYLLPLFLSLIITSSVSA). One can recognise a GH16 domain in the interval 22 to 211 (NFQRDVEITW…WSKAPFTASY (190 aa)). Glu-97 serves as the catalytic Nucleophile. Glu-101 (proton donor) is an active-site residue. Residue Glu-101 coordinates xyloglucan. Asn-105 is a glycosylation site (N-linked (GlcNAc...) asparagine). Residues 114 to 116 (HTN), 124 to 126 (DKE), 190 to 191 (DW), and Gly-195 contribute to the xyloglucan site. A disulfide bridge connects residues Cys-219 and Cys-228. Asn-230 carries an N-linked (GlcNAc...) asparagine glycan. Cys-267 and Cys-281 are joined by a disulfide. Residue Arg-272 participates in xyloglucan binding.

This sequence belongs to the glycosyl hydrolase 16 family. XTH group 2 subfamily. Post-translationally, contains at least one intrachain disulfide bond essential for its enzymatic activity. In terms of processing, N-glycosylated; essential for its enzymatic activity. Highly expressed. Predominantly expressed in green siliques. Expressed in young expanding leaves, trichomes, lateral root primordia, vascular tissue, abscission zones and elongating hypocols. Following wind stimulation, it decreases in the leaves of wind-stimulated plants, while it strongly increases in sites around cells of the pith parenchyma, between the vascular elements, and within the epidermis.

It is found in the secreted. The protein resides in the cell wall. Its subcellular location is the extracellular space. The protein localises to the apoplast. The enzyme catalyses breaks a beta-(1-&gt;4) bond in the backbone of a xyloglucan and transfers the xyloglucanyl segment on to O-4 of the non-reducing terminal glucose residue of an acceptor, which can be a xyloglucan or an oligosaccharide of xyloglucan.. In terms of biological role, catalyzes xyloglucan endohydrolysis (XEH) and/or endotransglycosylation (XET). Cleaves and religates xyloglucan polymers, an essential constituent of the primary cell wall, and thereby participates in cell wall construction of growing tissues. Its induction in case of mechanical stress, suggests that it may contribute in the adaptive changes in morphogenesis by being recruited to alter tissues tensil strength, or flexibility, enabling adaptation to mechanically stressful environments. The sequence is that of Xyloglucan endotransglucosylase/hydrolase protein 22 (XTH22) from Arabidopsis thaliana (Mouse-ear cress).